We begin with the raw amino-acid sequence, 67 residues long: Putative antitoxin PF1308 (67 aa).

It belongs to the UPF0165 family.

Functionally, possibly the antitoxin component of a type II toxin-antitoxin (TA) system. This Pyrococcus furiosus (strain ATCC 43587 / DSM 3638 / JCM 8422 / Vc1) protein is Putative antitoxin PF1308.